A 387-amino-acid chain; its full sequence is Proline-rich protein 5 (387 aa).

Interaction with RICTOR stretches follow at residues 10 to 96 (MSSP…LTKG) and 189 to 219 (HESRGVTEDYLRLETLIQKVVSPYLGTYGLY). The segment at 13-34 (PSLSDLGKREPGAAGTDERGTQ) is disordered. Residues 18-33 (LGKREPGAAGTDERGT) are compositionally biased toward basic and acidic residues. Position 253 is a phosphoserine (Ser-253). A disordered region spans residues 262–387 (NPVAEHEAEG…EAPGGRPSVV (126 aa)). A compositionally biased stretch (polar residues) spans 305-314 (SGTFRSSPTP). Ser-373 carries the phosphoserine modification.

This sequence belongs to the PROTOR family. Associated component of the mechanistic target of rapamycin complex 2 (mTORC2). Binds directly to MTOR and RICTOR within the TORC2 complex. In terms of tissue distribution, ubiquitously expressed. Expressed at high levels in kidney.

Its function is as follows. Associated subunit of mTORC2, which regulates cell growth and survival in response to hormonal signals. mTORC2 is activated by growth factors, but, in contrast to mTORC1, seems to be nutrient-insensitive. mTORC2 seems to function upstream of Rho GTPases to regulate the actin cytoskeleton, probably by activating one or more Rho-type guanine nucleotide exchange factors. PRR5 plays an important role in regulation of PDGFRB expression and in modulation of platelet-derived growth factor signaling. May act as a tumor suppressor in breast cancer. The protein is Proline-rich protein 5 of Mus musculus (Mouse).